We begin with the raw amino-acid sequence, 218 residues long: Chymotrypsin-2 (218 aa).

Residues 1–218 (IVGGTDAPRG…FLDWIQKNQL (218 aa)) form the Peptidase S1 domain. Residues Cys-25 and Cys-40 are joined by a disulfide bond. Residues His-39 and Asp-84 each act as charge relay system in the active site. 2 disulfides stabilise this stretch: Cys-148–Cys-161 and Cys-171–Cys-195. Ser-175 (charge relay system) is an active-site residue.

It belongs to the peptidase S1 family.

It localises to the secreted. The protein localises to the extracellular space. It catalyses the reaction Preferential cleavage: Tyr-|-Xaa, Trp-|-Xaa, Phe-|-Xaa, Leu-|-Xaa.. The sequence is that of Chymotrypsin-2 from Vespa crabro (European hornet).